A 434-amino-acid chain; its full sequence is Pectate lyase (434 aa).

Positions Met-1–Ala-22 are cleaved as a signal peptide. Residues Asn-68 and Asn-97 are each glycosylated (N-linked (GlcNAc...) asparagine). Ca(2+) contacts are provided by Asp-232, Asp-256, and Asp-260. Arg-312 is an active-site residue.

The protein belongs to the polysaccharide lyase 1 family. Requires Ca(2+) as cofactor.

It carries out the reaction Eliminative cleavage of (1-&gt;4)-alpha-D-galacturonan to give oligosaccharides with 4-deoxy-alpha-D-galact-4-enuronosyl groups at their non-reducing ends.. It functions in the pathway glycan metabolism; pectin degradation; 2-dehydro-3-deoxy-D-gluconate from pectin: step 2/5. The chain is Pectate lyase from Lilium longiflorum (Trumpet lily).